The sequence spans 773 residues: Kelch domain-containing protein 7A (773 aa).

The chain crosses the membrane as a helical span at residues 23 to 40 (VVLSAAALLLVTAAYKLY). Asn-61 carries N-linked (GlcNAc...) asparagine glycosylation. Disordered regions lie at residues 64-99 (EALG…LDYS) and 114-207 (SEEA…APNG). Residue Ser-89 is modified to Phosphoserine. Positions 114 to 126 (SEEATRKGSDESQ) are enriched in basic and acidic residues. Asn-256 carries N-linked (GlcNAc...) asparagine glycosylation. The interval 296–355 (KADSRPVPCPAALADAPSPGPGPEPLVTGAASRDEAANTAGGGASEAASPQPVASPSAPG) is disordered. Kelch repeat units lie at residues 323 to 370 (TGAA…ENPE), 488 to 534 (KRLV…LCTL), 537 to 585 (YLFV…ALEG), 586 to 628 (HLYA…ATVC), and 631 to 673 (EIFV…AVNG). Low complexity predominate over residues 340–354 (SEAASPQPVASPSAP). Position 361 is a phosphoserine (Ser-361).

The protein localises to the membrane. This is Kelch domain-containing protein 7A (Klhdc7a) from Mus musculus (Mouse).